A 72-amino-acid polypeptide reads, in one-letter code: Translation initiation factor IF-1 2 (72 aa).

The 72-residue stretch at 1–72 folds into the S1-like domain; sequence MAKEELIEFE…TKGRINYRHK (72 aa).

The protein belongs to the IF-1 family. In terms of assembly, component of the 30S ribosomal translation pre-initiation complex which assembles on the 30S ribosome in the order IF-2 and IF-3, IF-1 and N-formylmethionyl-tRNA(fMet); mRNA recruitment can occur at any time during PIC assembly.

The protein resides in the cytoplasm. In terms of biological role, one of the essential components for the initiation of protein synthesis. Stabilizes the binding of IF-2 and IF-3 on the 30S subunit to which N-formylmethionyl-tRNA(fMet) subsequently binds. Helps modulate mRNA selection, yielding the 30S pre-initiation complex (PIC). Upon addition of the 50S ribosomal subunit IF-1, IF-2 and IF-3 are released leaving the mature 70S translation initiation complex. The protein is Translation initiation factor IF-1 2 of Ralstonia nicotianae (strain ATCC BAA-1114 / GMI1000) (Ralstonia solanacearum).